The chain runs to 432 residues: Histidine--tRNA ligase (432 aa).

The protein belongs to the class-II aminoacyl-tRNA synthetase family.

It localises to the cytoplasm. The enzyme catalyses tRNA(His) + L-histidine + ATP = L-histidyl-tRNA(His) + AMP + diphosphate + H(+). The protein is Histidine--tRNA ligase of Halobacterium salinarum (strain ATCC 29341 / DSM 671 / R1).